A 293-amino-acid polypeptide reads, in one-letter code: Homoserine O-acetyltransferase (293 aa).

The Acyl-thioester intermediate role is filled by cysteine 141. Substrate-binding residues include lysine 162 and serine 190. Catalysis depends on histidine 234, which acts as the Proton acceptor. Glutamate 236 is a catalytic residue. Arginine 248 contacts substrate.

Belongs to the MetA family.

The protein localises to the cytoplasm. It carries out the reaction L-homoserine + acetyl-CoA = O-acetyl-L-homoserine + CoA. It functions in the pathway amino-acid biosynthesis; L-methionine biosynthesis via de novo pathway; O-acetyl-L-homoserine from L-homoserine: step 1/1. Transfers an acetyl group from acetyl-CoA to L-homoserine, forming acetyl-L-homoserine. The chain is Homoserine O-acetyltransferase from Campylobacter jejuni subsp. jejuni serotype O:2 (strain ATCC 700819 / NCTC 11168).